Here is a 176-residue protein sequence, read N- to C-terminus: ATP-dependent protease subunit HslV (176 aa).

Residue Thr-2 is part of the active site. Na(+) contacts are provided by Gly-157, Cys-160, and Thr-163.

It belongs to the peptidase T1B family. HslV subfamily. In terms of assembly, a double ring-shaped homohexamer of HslV is capped on each side by a ring-shaped HslU homohexamer. The assembly of the HslU/HslV complex is dependent on binding of ATP.

It is found in the cytoplasm. It carries out the reaction ATP-dependent cleavage of peptide bonds with broad specificity.. Allosterically activated by HslU binding. Functionally, protease subunit of a proteasome-like degradation complex believed to be a general protein degrading machinery. The protein is ATP-dependent protease subunit HslV of Enterobacter sp. (strain 638).